A 352-amino-acid chain; its full sequence is Holliday junction branch migration complex subunit RuvB (352 aa).

The tract at residues 1-181 (MTDRIVGAAK…FGIPVRLHFY (181 aa)) is large ATPase domain (RuvB-L). Residues L20, R21, G62, K65, T66, T67, 128-130 (EDF), R171, Y181, and R218 each bind ATP. T66 provides a ligand contact to Mg(2+). The small ATPAse domain (RuvB-S) stretch occupies residues 182–252 (EVAELEGIVR…AADKALQRLE (71 aa)). Residues 255 to 352 (ELGLDALDHR…FDGDEENGSA (98 aa)) are head domain (RuvB-H). Positions 291, 310, and 315 each coordinate DNA.

It belongs to the RuvB family. In terms of assembly, homohexamer. Forms an RuvA(8)-RuvB(12)-Holliday junction (HJ) complex. HJ DNA is sandwiched between 2 RuvA tetramers; dsDNA enters through RuvA and exits via RuvB. An RuvB hexamer assembles on each DNA strand where it exits the tetramer. Each RuvB hexamer is contacted by two RuvA subunits (via domain III) on 2 adjacent RuvB subunits; this complex drives branch migration. In the full resolvosome a probable DNA-RuvA(4)-RuvB(12)-RuvC(2) complex forms which resolves the HJ.

It is found in the cytoplasm. The catalysed reaction is ATP + H2O = ADP + phosphate + H(+). The RuvA-RuvB-RuvC complex processes Holliday junction (HJ) DNA during genetic recombination and DNA repair, while the RuvA-RuvB complex plays an important role in the rescue of blocked DNA replication forks via replication fork reversal (RFR). RuvA specifically binds to HJ cruciform DNA, conferring on it an open structure. The RuvB hexamer acts as an ATP-dependent pump, pulling dsDNA into and through the RuvAB complex. RuvB forms 2 homohexamers on either side of HJ DNA bound by 1 or 2 RuvA tetramers; 4 subunits per hexamer contact DNA at a time. Coordinated motions by a converter formed by DNA-disengaged RuvB subunits stimulates ATP hydrolysis and nucleotide exchange. Immobilization of the converter enables RuvB to convert the ATP-contained energy into a lever motion, pulling 2 nucleotides of DNA out of the RuvA tetramer per ATP hydrolyzed, thus driving DNA branch migration. The RuvB motors rotate together with the DNA substrate, which together with the progressing nucleotide cycle form the mechanistic basis for DNA recombination by continuous HJ branch migration. Branch migration allows RuvC to scan DNA until it finds its consensus sequence, where it cleaves and resolves cruciform DNA. The chain is Holliday junction branch migration complex subunit RuvB from Parvibaculum lavamentivorans (strain DS-1 / DSM 13023 / NCIMB 13966).